Here is a 212-residue protein sequence, read N- to C-terminus: Ras-related protein Rab-2A (212 aa).

Residues G16, V17, G18, K19, S20, C21, and T38 each contribute to the GTP site. S20 contacts Mg(2+). Residues 37 to 42 (LTIGVE) carry the Switch 1 motif. Mg(2+) is bound by residues T38 and D61. The short motif at 63-72 (AGQESFRSIT) is the Switch 2 element. Residues G64, N119, K120, D122, A150, and K151 each contribute to the GTP site. 2 S-geranylgeranyl cysteine lipidation sites follow: C211 and C212.

The protein belongs to the small GTPase superfamily. Rab family. Interacts with PRKCI. Interacts with TRIP11. Interacts (in GTP-bound form) with GARIN1B. Requires Mg(2+) as cofactor. In terms of processing, prenylated. Prenylation is required for association with cellular membranes.

It localises to the endoplasmic reticulum-Golgi intermediate compartment membrane. Its subcellular location is the melanosome. It is found in the endoplasmic reticulum membrane. The protein resides in the golgi apparatus membrane. The protein localises to the cytoplasmic vesicle. It localises to the secretory vesicle. Its subcellular location is the acrosome. It catalyses the reaction GTP + H2O = GDP + phosphate + H(+). Its activity is regulated as follows. Regulated by guanine nucleotide exchange factors (GEFs) which promote the exchange of bound GDP for free GTP, GTPase activating proteins (GAPs) which increase the GTP hydrolysis activity, and GDP dissociation inhibitors (GDIs) which inhibit the dissociation of the nucleotide from the GTPase. Its function is as follows. The small GTPases Rab are key regulators of intracellular membrane trafficking, from the formation of transport vesicles to their fusion with membranes. Rabs cycle between active GTP-bound and inactive GDP-bound states. In their active state, drive transport of vesicular carriers from donor organelles to acceptor organelles to regulate the membrane traffic that maintains organelle identity and morphology. RAB2A regulates autophagy by promoting autophagosome-lysosome fusion via recruitment of the HOPS endosomal tethering complex; this process involves autophagosomal RAB2A and lysosomal RAB39A recruitment of HOPS subcomplexes VPS39-VPS11 and VPS41-VPS16-VPS18-VPS33A, respectively, which assemble into a functional complex to mediate membrane tethering and SNAREs-driven membrane fusion. Required for protein transport from the endoplasmic reticulum to the Golgi complex. Regulates the compacted morphology of the Golgi. Together with RAB2B, redundantly required for efficient autophagic flux. The protein is Ras-related protein Rab-2A (RAB2A) of Gallus gallus (Chicken).